Here is a 452-residue protein sequence, read N- to C-terminus: Growth/differentiation factor 6 (452 aa).

Residues methionine 1–glycine 22 form the signal peptide. Residues phenylalanine 23 to arginine 332 constitute a propeptide that is removed on maturation. Residues serine 29–valine 93 form a disordered region. Basic and acidic residues-rich tracts occupy residues aspartate 37–lysine 46 and alanine 58–arginine 75. A glycan (N-linked (GlcNAc...) asparagine) is linked at asparagine 115. 2 disordered regions span residues arginine 244–glycine 267 and alanine 301–arginine 348. Residues alanine 301–proline 317 are compositionally biased toward low complexity. The segment covering glycine 327 to arginine 348 has biased composition (basic residues). Disulfide bonds link cysteine 351-cysteine 417, cysteine 380-cysteine 449, and cysteine 384-cysteine 451.

This sequence belongs to the TGF-beta family. In terms of assembly, homodimer; disulfide-linked.

Its subcellular location is the secreted. Its function is as follows. Growth factor that controls proliferation and cellular differentiation in the retina and bone formation. Plays a key role in regulating apoptosis during retinal development. Establishes dorsal-ventral positional information in the retina and controls the formation of the retinotectal map. Required for normal formation of bones and joints in the limbs, skull, digits and axial skeleton. Plays a key role in establishing boundaries between skeletal elements during development. Regulation of GDF6 expression seems to be a mechanism for evolving species-specific changes in skeletal structures. Seems to positively regulate differentiation of chondrogenic tissue through the growth factor receptors subunits BMPR1A, BMPR1B, BMPR2 and ACVR2A, leading to the activation of SMAD1-SMAD5-SMAD8 complex. The regulation of chondrogenic differentiation is inhibited by NOG. Also involved in the induction of adipogenesis from mesenchymal stem cells. This mechanism acts through the growth factor receptors subunits BMPR1A, BMPR2 and ACVR2A and the activation of SMAD1-SMAD5-SMAD8 complex and MAPK14/p38. In Rattus norvegicus (Rat), this protein is Growth/differentiation factor 6 (Gdf6).